Reading from the N-terminus, the 143-residue chain is Transcriptional regulator MraZ (143 aa).

2 consecutive SpoVT-AbrB domains span residues 5-47 (EYEH…TLEE) and 76-119 (AVEV…DRET).

Belongs to the MraZ family. Forms oligomers.

The protein resides in the cytoplasm. Its subcellular location is the nucleoid. The sequence is that of Transcriptional regulator MraZ from Staphylococcus saprophyticus subsp. saprophyticus (strain ATCC 15305 / DSM 20229 / NCIMB 8711 / NCTC 7292 / S-41).